We begin with the raw amino-acid sequence, 220 residues long: HTH-type transcriptional repressor GlaR (220 aa).

The 69-residue stretch at 1 to 69 folds into the HTH gntR-type domain; it reads MTITSLDGYR…NQKGYRVASM (69 aa). Residues 29–48 constitute a DNA-binding region (H-T-H motif); the sequence is MSLLTSRYALGVGPLREALS.

The protein localises to the cytoplasm. The repressive effect at the glaH promoter site is specifically relieved upon glutarate binding. Negatively regulates the expression of the glaH-lhgD-gabDTP operon in a temporal manner during entry into stationary phase or during the first few hours of carbon starvation. Thereby is involved in the regulation of a L-lysine degradation pathway that proceeds via cadaverine, glutarate and L-2-hydroxyglutarate. Binds to two primary and two secondary sites in the promoter region of the glaH operon with the consensus sequences TTGTN5TTTT and ATGTN5TTTT of the primary sites, each separated by six nucleotides. This chain is HTH-type transcriptional repressor GlaR, found in Escherichia coli (strain K12).